Here is a 260-residue protein sequence, read N- to C-terminus: Hydroxyethylthiazole kinase (260 aa).

Residue Met-36 coordinates substrate. Positions 112 and 157 each coordinate ATP. Gly-184 is a binding site for substrate.

The protein belongs to the Thz kinase family. Mg(2+) is required as a cofactor.

It catalyses the reaction 5-(2-hydroxyethyl)-4-methylthiazole + ATP = 4-methyl-5-(2-phosphooxyethyl)-thiazole + ADP + H(+). It functions in the pathway cofactor biosynthesis; thiamine diphosphate biosynthesis; 4-methyl-5-(2-phosphoethyl)-thiazole from 5-(2-hydroxyethyl)-4-methylthiazole: step 1/1. Functionally, catalyzes the phosphorylation of the hydroxyl group of 4-methyl-5-beta-hydroxyethylthiazole (THZ). This Shouchella clausii (strain KSM-K16) (Alkalihalobacillus clausii) protein is Hydroxyethylthiazole kinase.